The following is a 285-amino-acid chain: Transmembrane protein 53-B (285 aa).

A helical membrane pass occupies residues 165 to 185 (FLALAAFAIMVIILRIVLYPV).

The protein belongs to the TMEM53 family.

It localises to the nucleus outer membrane. Ensures normal bone formation, through the negative regulation of bone morphogenetic protein (BMP) signaling in osteoblast lineage cells by blocking cytoplasm-nucleus translocation of phosphorylated SMAD proteins. This is Transmembrane protein 53-B (tmem53-b) from Xenopus laevis (African clawed frog).